The chain runs to 421 residues: MGSLVLPLSAVFCLVAHSASGSPIMGLEQSPLEEDMPFFDDIFTEQDGIDFNTLLQSMKNEFLKTLNLSDIPVQDTGRVDPPEYMLELYNKFATDRTSMPSANIIRSFKNEDLFSQPVTFNGLRKYPLLFNVSIPHHEEVVMAELRLYTLVQRDRMMYDGVDRKITIFEVLESADGSEEERSMLVLVSTEIYGTNSEWETFDVTDATRRWQKSGPSTHQLEIHIESRQNQAEDTGRGQLEIDMSAQNKHDPLLVVFSDDQSNDKEQKEELNELITHEQDLDLDSDAFFSGPDEEALLQMRSNMIDDSSARIRRNAKGNYCKKTPLYIDFKEIGWDSWIIAPPGYEAYECRGVCNYPLAEHLTPTKHAIIQALVHLKNSQKASKACCVPTKLDPISILYLDKGVVTYKFKYEGMAVSECGCR.

An N-terminal signal peptide occupies residues 1–21 (MGSLVLPLSAVFCLVAHSASG). A propeptide spanning residues 22–313 (SPIMGLEQSP…IDDSSARIRR (292 aa)) is cleaved from the precursor. N-linked (GlcNAc...) asparagine glycosylation is found at Asn-67 and Asn-131. Disulfide bonds link Cys-320/Cys-386, Cys-349/Cys-418, and Cys-353/Cys-420.

The protein belongs to the TGF-beta family. As to quaternary structure, homodimer; disulfide-linked. Interacts with FBN1 (via N-terminal domain) and FBN2. Interacts with ENG. In the embryo, expressed exclusively in the ventricular trabecular myocardium of the developing heart from 9.0 dpc-13.5 dpc. By 16.5 dpc-18.5 dpc, only detectable in atria. Highly expressed in the adult heart where it is found in the right atrium but not in the left atrium. Lower levels in adult liver and lung.

The protein localises to the secreted. In terms of biological role, required for maintaining the proliferative activity of embryonic cardiomyocytes by preventing premature activation of the negative cell cycle regulator CDKN1C/p57KIP and maintaining the required expression levels of cardiogenic factors such as MEF2C and NKX2-5. Acts as a ligand for ACVRL1/ALK1, BMPR1A/ALK3 and BMPR1B/ALK6, leading to activation of SMAD1, SMAD5 and SMAD8 transcription factors. Inhibits endothelial cell migration and growth. May reduce cell migration and cell matrix adhesion in breast cancer cell lines. This is Bone morphogenetic protein 10 (Bmp10) from Mus musculus (Mouse).